The following is a 364-amino-acid chain: 3-isopropylmalate dehydrogenase (364 aa).

76–89 (GPKWDGNAPEKRPE) contacts NAD(+). Substrate contacts are provided by R96, R106, R134, and D223. Positions 223, 247, and 251 each coordinate Mg(2+). Residue 281–293 (GSAPDIAGTGAAN) coordinates NAD(+).

It belongs to the isocitrate and isopropylmalate dehydrogenases family. LeuB type 1 subfamily. In terms of assembly, homodimer. Requires Mg(2+) as cofactor. The cofactor is Mn(2+).

It localises to the cytoplasm. The enzyme catalyses (2R,3S)-3-isopropylmalate + NAD(+) = 4-methyl-2-oxopentanoate + CO2 + NADH. It participates in amino-acid biosynthesis; L-leucine biosynthesis; L-leucine from 3-methyl-2-oxobutanoate: step 3/4. In terms of biological role, catalyzes the oxidation of 3-carboxy-2-hydroxy-4-methylpentanoate (3-isopropylmalate) to 3-carboxy-4-methyl-2-oxopentanoate. The product decarboxylates to 4-methyl-2 oxopentanoate. The polypeptide is 3-isopropylmalate dehydrogenase (Shouchella clausii (strain KSM-K16) (Alkalihalobacillus clausii)).